Consider the following 1197-residue polypeptide: MRQWTKEQQAAIDARGSNLLVAAAAGSGKTAVLVERIIQIILKDRIDIDRLLIVTFTNAAAGEMRERIAGAIMTEMEKKTGGEEHLRRQLSLLNRASITTVHSFCIDVVRRHFHMIDVDPGFRIGDVTETSIMKLEALEELFEDEYEKGNEEFFNLVEAFGGTREDRPLQDLVLKIYGFIQSQPYPEIWLRERVEDFALSIEAFNQSPWIRTIKKRMGILLKGAMDLLEIAQTIALEPGGPDVYEEAILSDLDQIKELYHSLENPITDFYEQLNCINFIRLKTSKDSDPILKEECKDLRDKAKDIVKDIRENIFNVSPEEYVEDLNRLYPLMDYLYRLVIGFTERYTEKKTDKGIVDFNDLEHFALRILANDLAAQEYREKFEYIFVDEYQDSNIVQETLIQSIKREDNLFMVGDVKQSIYRFRLADPTLFIEKYETFGTEEGHINRRIDLAKNFRSRGQVLNGVNYIFKHMMSKELGEIDYDERAALYQGTEFEPIQDPSIEINLIEKNMEIDEEMEEELQELADIEVEARIVAKRIKALLNEEIYDPRVEGYRKIEYKDIVVLLRTTQNWAQSFLEVFVREGIPAYADANTGYFEAIEVNMFLNLLRVIDNKRQDIPLLSVMRSPIGDFTTEELIHIRVNDKTGTYYDAIEKYVEEKTDDLKYKLVSFIEKLNQWANDARYIKIDQFIWKLFMDTGYYYYVGAMPGGLQRQANLRVLFDRANQFEKTSIKGLFNFIKFIEKLQSSKGDMGAAKILGENDNVVRIMSIHKSKGLEFPVVITAGMGKNFNLRDTSADVLLHKDLGLGPKFTDPNLRTYRDTIAKLAMKDQIKIESLSEEMRILYVAFTRPKDKLIVVGSIRNIEKQVKKWSKADNVYSLMNAKNYLDWIGTALVKHPDGQALRELGGLGFDAASDGMEDSEWTINILGRQVIVLEEQDKVLKEEDYREKLLYFNREDFSSGGYTEYKEEIENRLNWKYDHPHSVQIPSKLSVSDIKKAHINEIDVIAHQIPILVKSPKFMEGKTTFTAAERGTVIHFVLQHLDLNKVGSEEDIREQIHWMVARELITEEESKVVDTKKILNYFYSPIGERMRKAKKVYRESPFIIEKSAGEVIEGLSDDIEDKLLVQGIIDCYFEEKDGLILIDYKNDIVLNGNIAAVVARYELQLSLYREALERITGREVKETYLYLFDVDQGVRL.

The region spanning 2-458 (RQWTKEQQAA…IDLAKNFRSR (457 aa)) is the UvrD-like helicase ATP-binding domain. 23–30 (AAAGSGKT) lines the ATP pocket. A UvrD-like helicase C-terminal domain is found at 485-774 (RAALYQGTEF…RIMSIHKSKG (290 aa)).

The protein belongs to the helicase family. AddA subfamily. In terms of assembly, heterodimer of AddA and AddB/RexB. Mg(2+) is required as a cofactor.

The enzyme catalyses Couples ATP hydrolysis with the unwinding of duplex DNA by translocating in the 3'-5' direction.. The catalysed reaction is ATP + H2O = ADP + phosphate + H(+). In terms of biological role, the heterodimer acts as both an ATP-dependent DNA helicase and an ATP-dependent, dual-direction single-stranded exonuclease. Recognizes the chi site generating a DNA molecule suitable for the initiation of homologous recombination. The AddA nuclease domain is required for chi fragment generation; this subunit has the helicase and 3' -&gt; 5' nuclease activities. This Alkaliphilus oremlandii (strain OhILAs) (Clostridium oremlandii (strain OhILAs)) protein is ATP-dependent helicase/nuclease subunit A.